A 1275-amino-acid chain; its full sequence is Inner capsid protein lambda-1 (1275 aa).

Basic residues predominate over residues 1–12; it reads MKRIPRKTKGKS. Residues 1–149 are disordered; the sequence is MKRIPRKTKG…DNEGGSNQKP (149 aa). 2 stretches are compositionally biased toward basic and acidic residues: residues 18–35 and 75–117; these read DSTE…DKQN and NNDE…DKSK. The segment covering 118–149 has biased composition (polar residues); the sequence is AQVTYSDTGINNANELSRSGNVDNEGGSNQKP. The C2H2-type zinc finger occupies 181–203; the sequence is YQCHVCSAVLFSPLDLDAHVASH.

It belongs to the turreted BTV-fold inner capsid family. As to quaternary structure, homodecamer; each decamer is made up of two conformers of VP2, called VP2A and VP2B. 12 homodecamers assemble to form an icosahedral capsid. Interacts with protein mu-NS; in viral inclusions. The cofactor is Mg(2+). It depends on Mn(2+) as a cofactor.

The protein localises to the virion. It catalyses the reaction ATP + H2O = ADP + phosphate + H(+). Inner capsid protein that self-assembles to form an icosahedral capsid with a T=2 symmetry, which consists of 120 copies of VP2, with channels at each of its five-fold vertices. This capsid constitutes the innermost concentric layer of the viral mature particle. Functionally, displays NTPase, RNA 5'-triphosphatase (RTPase) and RNA helicase activities and probably participates in transcription of the viral genome. Helicase activity might be involved in unwinding or reannealing dsRNA during RNA synthesis. RTPase enzymatic activity represents the first step in RNA capping, which yields a 5'-diphosphorylated plus-strand RNA. The sequence is that of Inner capsid protein lambda-1 (L3) from Reovirus type 1 (strain Lang) (T1L).